A 121-amino-acid polypeptide reads, in one-letter code: Succinate dehydrogenase assembly factor 3, mitochondrial (121 aa).

The N-terminal 35 residues, 1 to 35 (MRPSLVRLVRPRRPERKTSPILPPLKLYKALLRAH), are a transit peptide targeting the mitochondrion.

The protein belongs to the complex I LYR family. SDHAF3 subfamily. Interacts with the iron-sulfur protein subunit within the SDH catalytic dimer.

It localises to the mitochondrion matrix. Plays an essential role in the assembly of succinate dehydrogenase (SDH), an enzyme complex (also referred to as respiratory complex II) that is a component of both the tricarboxylic acid (TCA) cycle and the mitochondrial electron transport chain, and which couples the oxidation of succinate to fumarate with the reduction of ubiquinone (coenzyme Q) to ubiquinol. Promotes maturation of the iron-sulfur protein subunit of the SDH catalytic dimer, protecting it from the deleterious effects of oxidants. May act together with SDHAF1. The polypeptide is Succinate dehydrogenase assembly factor 3, mitochondrial (Debaryomyces hansenii (strain ATCC 36239 / CBS 767 / BCRC 21394 / JCM 1990 / NBRC 0083 / IGC 2968) (Yeast)).